Here is a 164-residue protein sequence, read N- to C-terminus: MMSKNFRFSVRTFTNTTARLANYGKPQNPPIDPTLHMRISPIERTGETIDVKRARLVYQSRKRGILESDLLLSRFAKKYLKQMTMEELDEYDKLLDEADWDIYYWATKNYDTTPLPKKWEDSKILKLLQKEAENEERVILRMPELDEGDFINGGKETSLSEVKN.

The protein belongs to the SDHAF2 family. In terms of assembly, interacts with the flavoprotein subunit within the SDH catalytic dimer.

The protein localises to the mitochondrion matrix. Functionally, plays an essential role in the assembly of succinate dehydrogenase (SDH), an enzyme complex (also referred to as respiratory complex II) that is a component of both the tricarboxylic acid (TCA) cycle and the mitochondrial electron transport chain, and which couples the oxidation of succinate to fumarate with the reduction of ubiquinone (coenzyme Q) to ubiquinol. Required for flavinylation (covalent attachment of FAD) of the flavoprotein subunit of the SDH catalytic dimer. This is Succinate dehydrogenase assembly factor 2, mitochondrial from Lodderomyces elongisporus (strain ATCC 11503 / CBS 2605 / JCM 1781 / NBRC 1676 / NRRL YB-4239) (Yeast).